Reading from the N-terminus, the 161-residue chain is Sec-independent protein translocase protein TatB (161 aa).

The helical transmembrane segment at 2-22 (FNDIGALELVTLVVLAVLVFG) threads the bilayer. Positions 102 to 161 (DAVHGRDAESSSSGSSSGSSSAASGNGRVDMSKKPEKPEKPGKTDKPAADDRPPFDMDAT) are disordered. Positions 111-126 (SSSSGSSSGSSSAASG) are enriched in low complexity. Positions 131-161 (DMSKKPEKPEKPGKTDKPAADDRPPFDMDAT) are enriched in basic and acidic residues.

This sequence belongs to the TatB family. The Tat system comprises two distinct complexes: a TatABC complex, containing multiple copies of TatA, TatB and TatC subunits, and a separate TatA complex, containing only TatA subunits. Substrates initially bind to the TatABC complex, which probably triggers association of the separate TatA complex to form the active translocon.

The protein resides in the cell membrane. Its function is as follows. Part of the twin-arginine translocation (Tat) system that transports large folded proteins containing a characteristic twin-arginine motif in their signal peptide across membranes. Together with TatC, TatB is part of a receptor directly interacting with Tat signal peptides. TatB may form an oligomeric binding site that transiently accommodates folded Tat precursor proteins before their translocation. This is Sec-independent protein translocase protein TatB from Streptomyces coelicolor (strain ATCC BAA-471 / A3(2) / M145).